The following is a 441-amino-acid chain: Glutamyl-tRNA reductase (441 aa).

Residues 49 to 52 (TCNR), serine 110, 115 to 117 (EPQ), and glutamine 121 contribute to the substrate site. Cysteine 50 functions as the Nucleophile in the catalytic mechanism. NADP(+) is bound at residue 190-195 (GAGEMA).

This sequence belongs to the glutamyl-tRNA reductase family. As to quaternary structure, homodimer.

The catalysed reaction is (S)-4-amino-5-oxopentanoate + tRNA(Glu) + NADP(+) = L-glutamyl-tRNA(Glu) + NADPH + H(+). Its pathway is porphyrin-containing compound metabolism; protoporphyrin-IX biosynthesis; 5-aminolevulinate from L-glutamyl-tRNA(Glu): step 1/2. In terms of biological role, catalyzes the NADPH-dependent reduction of glutamyl-tRNA(Glu) to glutamate 1-semialdehyde (GSA). This is Glutamyl-tRNA reductase from Sulfurihydrogenibium sp. (strain YO3AOP1).